The following is a 96-amino-acid chain: Large ribosomal subunit protein bL28 (96 aa).

It belongs to the bacterial ribosomal protein bL28 family.

In Methylobacterium nodulans (strain LMG 21967 / CNCM I-2342 / ORS 2060), this protein is Large ribosomal subunit protein bL28.